A 161-amino-acid chain; its full sequence is Nucleotide-binding protein Bamb_2603 (161 aa).

The protein belongs to the YajQ family.

In terms of biological role, nucleotide-binding protein. The chain is Nucleotide-binding protein Bamb_2603 from Burkholderia ambifaria (strain ATCC BAA-244 / DSM 16087 / CCUG 44356 / LMG 19182 / AMMD) (Burkholderia cepacia (strain AMMD)).